The primary structure comprises 322 residues: Thioredoxin reductase (322 aa).

FAD-binding positions include 12-15 (SGPA), 34-42 (EGAVTAGGA), asparagine 51, and valine 84. The cysteines at positions 136 and 139 are disulfide-linked. Residues histidine 176, arginine 182, and tyrosine 259 each coordinate NADP(+). Residues aspartate 279 and 286 to 289 (RQAI) contribute to the FAD site. Arginine 286 lines the NADP(+) pocket.

The protein belongs to the class-II pyridine nucleotide-disulfide oxidoreductase family. As to quaternary structure, homodimer. The cofactor is FAD.

The enzyme catalyses [thioredoxin]-dithiol + NADP(+) = [thioredoxin]-disulfide + NADPH + H(+). Its function is as follows. Component of the thioredoxin-thioredoxin reductase system which may be involved in biosynthesis of penicillins and cephalosporins and may be important in determining the thiol-disulfide redox balance. The sequence is that of Thioredoxin reductase from Streptomyces clavuligerus.